The primary structure comprises 682 residues: E3 ubiquitin ligase Rnf157 (682 aa).

Gly2 is lipidated: N-myristoyl glycine. The segment at 277–317 (CVVCLSDVRDTLILPCRHCASCNVHCADTLRYQANNCPICR) adopts an RING-type; degenerate zinc-finger fold. Residues 330 to 333 (RKKL) carry the D-box 1 motif. Disordered regions lie at residues 440–604 (QNSS…VQED) and 655–682 (NTQRRRLSPSSLEDPEEDRPCVWDPLAV). Polar residues predominate over residues 479 to 538 (ESENLTLSSSGAVDQSSCTGTPLSSTISSPEDPASSSLAQSVMSMASSQISTDTVSSMSG). Residues 585-597 (QDAEGNDIMEEED) show a composition bias toward acidic residues. The D-box 2 motif lies at 658–661 (RRRL). Phosphoserine occurs at positions 662, 664, and 665.

As to quaternary structure, interacts with APBB1. Interacts with CHD1; CHD1-binding controls RNF157 stability. Also interacts with ATRN, MEGF8, TECR, MSI2, PLRG1, BYSL, MTERF3, PSMA1, MRPS18B, PRPF4, FASTKD2, SLC25A1, SMU1, CNOT9, MRPS2, MAGT1, FXR2, EMD, PSMD8, HDAC1, RAN, HSD17B12, TXNDC5 and MRPL19. In terms of tissue distribution, predominantly expressed in the brain.

The protein resides in the cytoplasm. It carries out the reaction S-ubiquitinyl-[E2 ubiquitin-conjugating enzyme]-L-cysteine + [acceptor protein]-L-lysine = [E2 ubiquitin-conjugating enzyme]-L-cysteine + N(6)-ubiquitinyl-[acceptor protein]-L-lysine.. Its function is as follows. E3 ubiquitin ligase that ubiquitinates APBB1 for its degradation by the proteasome and thus prevents apoptosis and promotes survival of neurons. Has a dual role in neurons as it is also required for dendrite growth and maintenance for which its ligase activity is not critical. May act as a scaffold molecule to regulate this process. Acts as a downstream effector of the interconnected PI3K and MAPK signaling pathways and thus participates in the regulation of the cell cycle. This is E3 ubiquitin ligase Rnf157 (Rnf157) from Rattus norvegicus (Rat).